Reading from the N-terminus, the 904-residue chain is uncharacterized protein (904 aa).

2 disordered regions span residues 247–275 and 328–360; these read KIGK…SLEF and GDSQ…HHFS. Residues 342 to 360 show a composition bias toward polar residues; that stretch reads GAQTLSPTSHPSSANHHFS. Residues 778–798 form a helical membrane-spanning segment; the sequence is VVQGMILMFAGGKLIFGGRVL.

Its subcellular location is the membrane. This is an uncharacterized protein from Homo sapiens (Human).